We begin with the raw amino-acid sequence, 1235 residues long: MPSNSKRSMAPPTNVSKQISATSTSKKAPTKPTTQNSIAGAKSTGSPETRTSSPEHMESPETPTATTTVNRKKQKRRQKQAARLAAERQSSNMPAQNGDGGHDIVADFSRAATQGQHAAFDNDDLDYTDDETHYSTQGQRGLQHDKNGVLHQSQEPSKRKGKKKKNRKSRSQSHQAEGSSTSMSTPSASLARPVTLPPLSSSAYRSAHKVTKDRIWNTSTHEERERIKEFWLQLGEEERRSLVKVEKEAVLRKMKEQQKHSCSCTVCGRKRTAIEEELEVLYDAYYEELEQYANHKQGSFENGAPIGAPPRLYQPPLRTLDRHSHHPVAQHPSRGRVQELPDDDEDLDDDYDEDDEDDEPYSEDELEDAARTTRADFFAFGNSLTVKDGILTVADDLLKNDGKHFIDMMEQLAERRMQREEDTQYAAASAAHQSMHAGHNHGPPLDEEEYDDEEEEDYDSQDDEEYEEDEMDAMTEEQRMEEGRRMFQIFAARMFEQRVLTAYREKIARERQERLIEELEEENRLDVEREAKKAREAQKRKDKKKLQKQAKEEERAKREAERAAEEAAQKALEEKRLEEQRRKKEEQRKKREAEKKAQEEERQRKEAERQKRLKEERERQAEFERKQREQKEREKKKREEAKKREREEKEAKERELREKKIKEERERREREEKARQEKEAAAKAERESREKAKREEQAAQQAAAQAAAVQAAKRASQSGPTHLPPGLQHPQGPSALQSPHFQVATPVVPKAPTPIRPRQPSQQGSHASSPRSQPAHVDISQTSSLSPGSVSTTIPGKGVSQAPLLHHPQPSAPLSPLGGVGRGSHTLGFSPMQSLNGLPTNPGTIPAMGPRMPMAHDMSMYTNHSGPLGGQYRGFASPDSIPLPPGITGPRHLGQGRGFQMEVGHTSLPFHPQPNAAGPISAAAPQSSQNSGASLTHTRQPSISFERNQHETQPQSQPISRPAPIQRPASTVPHDQHKDESKTNQQEIDELSTQLGSSALLDDSDIPLTAPPSQPLSSALPPGLPGAGRIGFAGPSLFSDHLGSSKPHFSLGAPGSGAGWAHNPFGSPGFPAAPSWGPSSGAGWPTNAFGILGGSHRAHTSRPVAIRLSVIQACKQLNTTSGTDSSGYHNVNQILRQVEQLNSPNESQIGLDEMLDICDTEGNPQNGGGSFIIKNEGPKGTFVKFEPDNNSISSSTRGSVVPGDIGSPVPGSSLPTPGSGSRQFATTNISPTTGF.

The segment covering 1 to 19 (MPSNSKRSMAPPTNVSKQI) has biased composition (polar residues). Disordered regions lie at residues 1 to 210 (MPSN…AHKV), 300 to 369 (FENG…LEDA), 416 to 480 (RMQR…EQRM), 517 to 848 (EELE…IPAM), 904 to 987 (GHTS…NQQE), 1001 to 1023 (LDDS…LPPG), and 1186 to 1235 (EPDN…TTGF). The segment covering 20-34 (SATSTSKKAPTKPTT) has biased composition (low complexity). Residues 35–52 (QNSIAGAKSTGSPETRTS) are compositionally biased toward polar residues. 2 stretches are compositionally biased toward basic residues: residues 70–80 (NRKKQKRRQKQ) and 159–171 (RKGK…KSRS). The segment covering 179 to 189 (SSTSMSTPSAS) has biased composition (low complexity). The span at 340–367 (LPDDDEDLDDDYDEDDEDDEPYSEDELE) shows a compositional bias: acidic residues. Over residues 426-437 (AAASAAHQSMHA) the composition is skewed to low complexity. Acidic residues predominate over residues 445–475 (LDEEEYDDEEEEDYDSQDDEEYEEDEMDAMT). Positions 502 to 714 (AYREKIARER…QAAAVQAAKR (213 aa)) form a coiled coil. Basic and acidic residues-rich tracts occupy residues 517–539 (EELE…EAQK) and 549–697 (QAKE…REEQ). The segment covering 698–715 (AAQQAAAQAAAVQAAKRA) has biased composition (low complexity). Composition is skewed to polar residues over residues 759-772 (QPSQ…SPRS), 779-794 (ISQT…STTI), 831-843 (PMQS…TNPG), and 924-959 (APQS…SQPI). The span at 1188-1198 (DNNSISSSTRG) shows a compositional bias: polar residues. Positions 1206 to 1221 (GSPVPGSSLPTPGSGS) are enriched in low complexity. Residues 1222 to 1235 (RQFATTNISPTTGF) show a composition bias toward polar residues.

The protein belongs to the NST1 family.

It is found in the cytoplasm. Its function is as follows. May act as a negative regulator of salt tolerance. The sequence is that of Stress response protein NST1 (NST1) from Coccidioides immitis (strain RS) (Valley fever fungus).